A 377-amino-acid polypeptide reads, in one-letter code: Queuine tRNA-ribosyltransferase (377 aa).

The active-site Proton acceptor is aspartate 89. Substrate contacts are provided by residues 89-93, aspartate 143, glutamine 187, and glycine 214; that span reads DSGGF. The segment at 245–251 is RNA binding; that stretch reads GVGKPED. The active-site Nucleophile is aspartate 264. Residues 269-273 form an RNA binding; important for wobble base 34 recognition region; it reads TRNAR. Positions 302, 304, 307, and 333 each coordinate Zn(2+).

It belongs to the queuine tRNA-ribosyltransferase family. Homodimer. Within each dimer, one monomer is responsible for RNA recognition and catalysis, while the other monomer binds to the replacement base PreQ1. The cofactor is Zn(2+).

It catalyses the reaction 7-aminomethyl-7-carbaguanine + guanosine(34) in tRNA = 7-aminomethyl-7-carbaguanosine(34) in tRNA + guanine. It participates in tRNA modification; tRNA-queuosine biosynthesis. Functionally, catalyzes the base-exchange of a guanine (G) residue with the queuine precursor 7-aminomethyl-7-deazaguanine (PreQ1) at position 34 (anticodon wobble position) in tRNAs with GU(N) anticodons (tRNA-Asp, -Asn, -His and -Tyr). Catalysis occurs through a double-displacement mechanism. The nucleophile active site attacks the C1' of nucleotide 34 to detach the guanine base from the RNA, forming a covalent enzyme-RNA intermediate. The proton acceptor active site deprotonates the incoming PreQ1, allowing a nucleophilic attack on the C1' of the ribose to form the product. After dissociation, two additional enzymatic reactions on the tRNA convert PreQ1 to queuine (Q), resulting in the hypermodified nucleoside queuosine (7-(((4,5-cis-dihydroxy-2-cyclopenten-1-yl)amino)methyl)-7-deazaguanosine). This Shewanella halifaxensis (strain HAW-EB4) protein is Queuine tRNA-ribosyltransferase.